The sequence spans 451 residues: Multidrug export protein MepA (451 aa).

Helical transmembrane passes span 26–46, 54–74, 97–117, 139–159, 170–190, 194–214, 245–265, 282–302, 318–338, 355–375, 397–417, and 418–438; these read MIGTLLSVIYGILNIYFIGFL, AISLTLPVFAILMGLGNLFGV, SFSIYGGIALGLIVILVTLPF, LKVMFLSAPFVILFFILEQFA, IGMLASVGLNIILDPILIFGF, VVGAALGTAISNVAAALFFII, IPAFLMSILMGFTGLVLNLFL, LVQFPELIIMGLCEGVVPLIA, AVIMSIGVIFVVCMIAVFTIG, ATFILKVTMASLLLNGIGFLF, AIIIPVLFIMNALFGLTGVIW, and SLLIAESLCALAAMLIVYLLR.

This sequence belongs to the multi antimicrobial extrusion (MATE) (TC 2.A.66.1) family. MepA subfamily.

It localises to the cell membrane. In terms of biological role, multidrug resistance efflux protein. Contributes to resistance to the glycylcycline antibiotic tigecycline. This is Multidrug export protein MepA (mepA) from Staphylococcus aureus (strain N315).